A 435-amino-acid chain; its full sequence is MSNFSPREIVSELDRYIIGQKDAKRAVAIALRNRWRRQQLDDELRDEVMPKNILMIGPTGVGKTEISRRLAKLAGAPFVKVEATKFTEVGYVGRDVEQIVRDLVEVGISLVREKRRAEVKAKAHQNAEERVLDALVGTTASPATRDSFRKKLRANELDDKEIEVDVAEAGSPGGAFEIPGMPGANIGVLNLSEMFGKALGGRTKKVKTTVKDSYALLVNDESDKLLDNEQIQREAVAAAENDGIVFLDEIDKIATREGGIGAGVSREGVQRDLLPLVEGTTVATKYGPVKTDHILFIASGAFHVAKPSDLLPELQGRLPIRVELRALTKEDFRRILTETEASLIRQYKALLETEGVALDFTEDAIDALAEVAVQLNANVENIGARRLQTVMERVLDDVSFNAPDRGGQGVTIDAEYVRRHVGDLAANTDLSRYIL.

ATP-binding positions include isoleucine 18, 60 to 65, aspartate 248, glutamate 313, and arginine 385; that span reads GVGKTE.

It belongs to the ClpX chaperone family. HslU subfamily. A double ring-shaped homohexamer of HslV is capped on each side by a ring-shaped HslU homohexamer. The assembly of the HslU/HslV complex is dependent on binding of ATP.

Its subcellular location is the cytoplasm. In terms of biological role, ATPase subunit of a proteasome-like degradation complex; this subunit has chaperone activity. The binding of ATP and its subsequent hydrolysis by HslU are essential for unfolding of protein substrates subsequently hydrolyzed by HslV. HslU recognizes the N-terminal part of its protein substrates and unfolds these before they are guided to HslV for hydrolysis. In Rhizobium meliloti (strain 1021) (Ensifer meliloti), this protein is ATP-dependent protease ATPase subunit HslU.